Consider the following 262-residue polypeptide: Ribosomal RNA small subunit methyltransferase A (262 aa).

Asn-13, Leu-15, Gly-40, Glu-61, Asp-85, and Asn-105 together coordinate S-adenosyl-L-methionine.

It belongs to the class I-like SAM-binding methyltransferase superfamily. rRNA adenine N(6)-methyltransferase family. RsmA subfamily.

The protein resides in the cytoplasm. The catalysed reaction is adenosine(1518)/adenosine(1519) in 16S rRNA + 4 S-adenosyl-L-methionine = N(6)-dimethyladenosine(1518)/N(6)-dimethyladenosine(1519) in 16S rRNA + 4 S-adenosyl-L-homocysteine + 4 H(+). Its function is as follows. Specifically dimethylates two adjacent adenosines (A1518 and A1519) in the loop of a conserved hairpin near the 3'-end of 16S rRNA in the 30S particle. May play a critical role in biogenesis of 30S subunits. This chain is Ribosomal RNA small subunit methyltransferase A, found in Laribacter hongkongensis (strain HLHK9).